The sequence spans 318 residues: NADH-ubiquinone oxidoreductase chain 1 (318 aa).

Transmembrane regions (helical) follow at residues 3–23 (LINL…LTLL), 69–89 (MLFI…WTPL), 102–122 (MLFI…SGWA), 144–164 (VTLA…TLLS), 171–191 (YIWL…STLA), 222–242 (LFFL…IILF), 253–273 (ELYT…FLWI), and 294–314 (LPLT…LAGI).

Belongs to the complex I subunit 1 family. In terms of assembly, core subunit of respiratory chain NADH dehydrogenase (Complex I) which is composed of 45 different subunits.

It localises to the mitochondrion inner membrane. It catalyses the reaction a ubiquinone + NADH + 5 H(+)(in) = a ubiquinol + NAD(+) + 4 H(+)(out). Its function is as follows. Core subunit of the mitochondrial membrane respiratory chain NADH dehydrogenase (Complex I) which catalyzes electron transfer from NADH through the respiratory chain, using ubiquinone as an electron acceptor. Essential for the catalytic activity and assembly of complex I. The sequence is that of NADH-ubiquinone oxidoreductase chain 1 (MT-ND1) from Murina suilla (Brown tube-nosed bat).